Consider the following 402-residue polypeptide: Sulfate adenylyltransferase (402 aa).

This sequence belongs to the sulfate adenylyltransferase family.

The enzyme catalyses sulfate + ATP + H(+) = adenosine 5'-phosphosulfate + diphosphate. It participates in sulfur metabolism; hydrogen sulfide biosynthesis; sulfite from sulfate: step 1/3. This Ruthia magnifica subsp. Calyptogena magnifica protein is Sulfate adenylyltransferase.